The following is a 338-amino-acid chain: tRNA N6-adenosine threonylcarbamoyltransferase (338 aa).

Positions 110 and 114 each coordinate Fe cation. Substrate contacts are provided by residues 132–136 (VLSGG), D165, G178, and N274. D298 serves as a coordination point for Fe cation.

Belongs to the KAE1 / TsaD family. Fe(2+) is required as a cofactor.

It is found in the cytoplasm. The catalysed reaction is L-threonylcarbamoyladenylate + adenosine(37) in tRNA = N(6)-L-threonylcarbamoyladenosine(37) in tRNA + AMP + H(+). Functionally, required for the formation of a threonylcarbamoyl group on adenosine at position 37 (t(6)A37) in tRNAs that read codons beginning with adenine. Is involved in the transfer of the threonylcarbamoyl moiety of threonylcarbamoyl-AMP (TC-AMP) to the N6 group of A37, together with TsaE and TsaB. TsaD likely plays a direct catalytic role in this reaction. This chain is tRNA N6-adenosine threonylcarbamoyltransferase, found in Borrelia duttonii (strain Ly).